Consider the following 533-residue polypeptide: Glucose-6-phosphate exchanger SLC37A1 (533 aa).

Residues 18–38 (QWYRAFIFILTFLLYASFHLS) traverse the membrane as a helical segment. A glycan (N-linked (GlcNAc...) asparagine) is linked at N81. 4 helical membrane-spanning segments follow: residues 100–120 (GALD…SGII), 129–149 (YLTF…LGYF), 157–177 (FYVV…PSVV), and 222–242 (SFVV…LFLI). The N-linked (GlcNAc...) asparagine glycan is linked to N263. 7 consecutive transmembrane segments (helical) span residues 304 to 324 (VVIL…TGAL), 334 to 354 (LCLL…PLYI), 366 to 386 (GELS…AGVI), 394 to 414 (ASTC…FSTV), 423 to 443 (IAML…ITTA), 466 to 486 (AIID…AGLL), and 490 to 510 (GWSN…LFLI).

It belongs to the major facilitator superfamily. Organophosphate:Pi antiporter (OPA) (TC 2.A.1.4) family. Expressed in numerous tissues, with highest expression in pancreas, kidney, bone marrow, spleen, liver, small intestine, as well as in fetal brain, liver and spleen.

Its subcellular location is the endoplasmic reticulum membrane. The enzyme catalyses D-glucose 6-phosphate(in) + phosphate(out) = D-glucose 6-phosphate(out) + phosphate(in). Inhibited by vanadate but not by chlorogenic acid. In terms of biological role, inorganic phosphate and glucose-6-phosphate antiporter. May transport cytoplasmic glucose-6-phosphate into the lumen of the endoplasmic reticulum and translocate inorganic phosphate into the opposite direction. Independent of a lumenal glucose-6-phosphatase. May not play a role in homeostatic regulation of blood glucose levels. The sequence is that of Glucose-6-phosphate exchanger SLC37A1 from Homo sapiens (Human).